The sequence spans 395 residues: Bone morphogenetic protein 2 (395 aa).

A signal peptide spans 1–23; that stretch reads MVAGTRCLLALLLPQVLLGGAAG. Positions 24 to 281 are cleaved as a propeptide — cleaved by PCSK5; it reads LIPELGRRKF…GHPLHRREKR (258 aa). Ser86 is modified (phosphoserine). N-linked (GlcNAc...) asparagine glycosylation is found at Asn134 and Asn199. Positions 270 to 292 are disordered; it reads GKGHPLHRREKRQAKHKQRKRLK. Residues 273–292 are compositionally biased toward basic residues; it reads HPLHRREKRQAKHKQRKRLK. Intrachain disulfides connect Cys295–Cys360, Cys324–Cys392, and Cys328–Cys394. Asn337 carries N-linked (GlcNAc...) asparagine glycosylation.

It belongs to the TGF-beta family. In terms of assembly, homodimer; disulfide-linked. Interacts with SOSTDC1. Interacts with GREM2, RGMA, RGMB and RGMC. Interacts with ASPN. Interacts with MAFP5. Interacts with FBN1 (via N-terminal domain) and FBN2. Interacts with type I receptor BMPR1A. Interacts with type II receptor BMPR2. Interacts with SCUBE3. Interacts with TNFAIP6 (primarily via Link domain); this interaction is inhibited by hyaluronan. Interacts with ERFE. Interacts with BMPR1A/ALK3; the interaction may induce HAMP expression. Forms heterodimers with BMP6 in vitro; the heterodimer then binds to its receptor BMPR1A /ALK3 and may induce HAMP expression. Interacts with TGFBR3.

It is found in the secreted. Its function is as follows. Growth factor of the TGF-beta superfamily that plays essential roles in many developmental processes, including cardiogenesis, neurogenesis, and osteogenesis. Induces cartilage and bone formation. Initiates the canonical BMP signaling cascade by associating with type I receptor BMPR1A and type II receptor BMPR2. Once all three components are bound together in a complex at the cell surface, BMPR2 phosphorylates and activates BMPR1A. In turn, BMPR1A propagates signal by phosphorylating SMAD1/5/8 that travel to the nucleus and act as activators and repressors of transcription of target genes. Also acts to promote expression of HAMP, via the interaction with its receptor BMPR1A/ALK3. Can also signal through non-canonical pathways such as ERK/MAP kinase signaling cascade that regulates osteoblast differentiation. Also stimulates the differentiation of myoblasts into osteoblasts via the EIF2AK3-EIF2A-ATF4 pathway by stimulating EIF2A phosphorylation which leads to increased expression of ATF4 which plays a central role in osteoblast differentiation. Acts as a positive regulator of odontoblast differentiation during mesenchymal tooth germ formation, expression is repressed during the bell stage by MSX1-mediated inhibition of CTNNB1 signaling. The chain is Bone morphogenetic protein 2 (BMP2) from Oryctolagus cuniculus (Rabbit).